Reading from the N-terminus, the 374-residue chain is Flagellar P-ring protein 1 (374 aa).

A signal peptide spans 1–26 (MVPNLMVIKKHLIGLLLILCPLSLQA).

The protein belongs to the FlgI family. The basal body constitutes a major portion of the flagellar organelle and consists of four rings (L,P,S, and M) mounted on a central rod.

Its subcellular location is the periplasm. It localises to the bacterial flagellum basal body. Functionally, assembles around the rod to form the L-ring and probably protects the motor/basal body from shearing forces during rotation. In Photobacterium profundum (strain SS9), this protein is Flagellar P-ring protein 1.